Consider the following 570-residue polypeptide: NADPH oxidase 2 (570 aa).

Topologically, residues 2-9 are cytoplasmic; it reads GNWAVNEG. The helical transmembrane segment at 10-36 threads the bilayer; sequence LSIFVILVWLGLNVFLFVWYYRVYDIP. The Extracellular portion of the chain corresponds to 37-46; it reads PKFFYTRKLL. Residues 47 to 72 form a helical membrane-spanning segment; sequence GSALALARAPAACLNFNCMLILLPVC. A Ferric oxidoreductase domain is found at 54 to 286; it reads RAPAACLNFN…MFLYLCERLV (233 aa). Residues 73–95 lie on the Cytoplasmic side of the membrane; the sequence is RNLLSFLRGSSACCSTRVRRQLD. The chain crosses the membrane as a helical span at residues 96–130; sequence RNLTFHKMVAWMIALHSAIHTIAHLFNVEWCVNAR. The heme b site is built by H101 and H115. Over 131–163 the chain is Extracellular; sequence VNNSDPYSVALSELGDRQNESYLNFARKRIKNP. N-linked (GlcNAc...) asparagine glycosylation is found at N132 and N149. A Glycyl lysine isopeptide (Lys-Gly) (interchain with G-Cter in ubiquitin) cross-link involves residue K161. A helical membrane pass occupies residues 164–194; the sequence is EGGLYLAVTLLAGITGVVITLCLILIITSST. Topologically, residues 195 to 203 are cytoplasmic; that stretch reads KTIRRSYFE. Positions 199 and 200 each coordinate FAD. A helical transmembrane segment spans residues 204–222; it reads VFWYTHHLFVIFFIGLAIH. Residues W206, H209, H222, R226, and I227 each coordinate heme b. Topologically, residues 223–267 are extracellular; it reads GAERIVRGQTAESLAVHNITVCEQKISEWGKIKECPIPQFAGNPP. N240 carries an N-linked (GlcNAc...) asparagine glycan. K255 participates in a covalent cross-link: Glycyl lysine isopeptide (Lys-Gly) (interchain with G-Cter in ubiquitin). Heme b contacts are provided by M268, Y280, and R287. Residues 268-285 form a helical membrane-spanning segment; it reads MTWKWIVGPMFLYLCERL. The Cytoplasmic segment spans residues 286-570; that stretch reads VRFWRSQQKV…VHFIFNKENF (285 aa). Positions 287-397 constitute an FAD-binding FR-type domain; it reads RFWRSQQKVV…DGPFGTASED (111 aa). Residues K294, K299, K306, K328, and K334 each participate in a glycyl lysine isopeptide (Lys-Gly) (interchain with G-Cter in ubiquitin) cross-link. FAD-binding residues include W337, H338, P339, T341, H354, R356, W361, and T362. K381 is covalently cross-linked (Glycyl lysine isopeptide (Lys-Gly) (interchain with G-Cter in ubiquitin)). The NADPH site is built by I411, R446, and T481. Residue K506 forms a Glycyl lysine isopeptide (Lys-Gly) (interchain with G-Cter in ubiquitin) linkage. R513 is a binding site for NADPH. A Glycyl lysine isopeptide (Lys-Gly) (interchain with G-Cter in ubiquitin) cross-link involves residue K567.

As to quaternary structure, component of the phagocyte NADPH oxidase core complex/cytochrome b558 complex, composed of CYBB (heavy chain (beta)) and CYBA (light chain (alpha)). Component of the phagocyte NADPH oxidase complex composed of an obligatory core heterodimer formed by the membrane proteins CYBA and CYBB and the cytosolic regulatory subunits NCF1/p47-phox, NCF2/p67-phox, NCF4/p40-phox and the small GTPase RAC1 or RAC2. Interacts with NCF1 (phosphorylated form). Interacts with NCF2; the interaction is enhanced in the presence of GBP7. Interacts with RAC2. Interacts with RAC1. Interacts with calprotectin (S100A8/9). Interacts with NRROS; the interaction is direct and impairs formation of a stable NADPH oxidase complex. Interacts with CYBC1; CYBC1 may act as a chaperone stabilizing Cytochrome b-245 heterodimer. The CYBA-CYBB complex interacts with GBP7. FAD serves as cofactor. Post-translationally, glycosylated. In terms of processing, phosphorylated on Ser and Thr residues by PKC during neutrophils activation. Phosphorylation enhances the NADPH oxidase activity and stimulates its interaction with RAC2, NCF2/p67-phox, and NCF1/p47-phox. Undergoes 'Lys-48'-linked polyubiquitination, likely by RNF145, triggering endoplasmic reticulum-associated degradation. As to expression, detected in neutrophils (at protein level).

The protein localises to the cell membrane. It carries out the reaction NADPH + 2 O2 = 2 superoxide + NADP(+) + H(+). Its function is as follows. Catalytic subunit of the phagocyte NADPH oxidase complex that mediates the transfer of electrons from cytosolic NADPH to O2 to produce the superoxide anion (O2(-)). In the activated complex, electrons are first transferred from NADPH to flavin adenine dinucleotide (FAD) and subsequently transferred via two heme molecules to molecular oxygen, producing superoxide through an outer-sphere reaction. Activation of the NADPH oxidase complex is initiated by the assembly of cytosolic subunits of the NADPH oxidase complex with the core NADPH oxidase complex to form a complex at the plasma membrane or phagosomal membrane. This activation process is initiated by phosphorylation dependent binding of the cytosolic NCF1/p47-phox subunit to the C-terminus of CYBA/p22-phox. NADPH oxidase complex assembly is impaired through interaction with NRROS. The polypeptide is NADPH oxidase 2 (Homo sapiens (Human)).